The chain runs to 449 residues: MATRSQNVAAAPQPPQNRGNVAALGKQKAVVAGRPDAKNRRALGEIGNVMNVRLPEGKPLQQAPAGRTANFGAQLLKNAQANAAANKQNAVAPAAVARPAQRQARKAPVKPAPPPPEHVIEISSDSDQSMRQQSEGSASSVRKCSRKKVINTLTSVLTARSKVACGITDKPREVIEDIDKLDGDNELAVVDYIEDIYKFYKVAENECRPCDYIDTQVEINSKMRAILADWIIEVHHKFELMPETLYLSMYVIDRYLSMQQVQRRELQLVGVSAMLIACKYEEIWAPEVNDFILISDSAYTREQILAMEKGILNKLQWNLTVPTAYVFIMRYLKAGASADNKSDKEMEHMAFFFAELALMQYGLVASLPSKVAASAVYAARLTLKKSPLWTDTLKHHTGFTESQLLDSAKLLVTSHSTAPESKLRVVYKKYSSEQLGGVALRSPAVELCK.

2 disordered regions span residues 1-34 (MATR…VAGR) and 90-143 (AVAP…SVRK). 2 stretches are compositionally biased toward low complexity: residues 90-102 (AVAP…PAQR) and 121-134 (EISS…RQQS).

It belongs to the cyclin family. Cyclin AB subfamily.

This is Cyclin-B1-1 (CYCB1-1) from Oryza sativa subsp. japonica (Rice).